The sequence spans 200 residues: Protein Rv0461 (200 aa).

The segment at 47 to 67 (DRAGKSWPGSTPKPQEDPVGV) is disordered. 3 helical membrane passes run 102 to 122 (FVLV…SLFY), 134 to 154 (VFVV…LALV), and 159 to 179 (LITA…AAAA).

The protein resides in the cell membrane. In Mycobacterium tuberculosis (strain ATCC 25618 / H37Rv), this protein is Protein Rv0461.